The sequence spans 149 residues: Putative sugar phosphate isomerase YwlF (149 aa).

His9 lines the substrate pocket. The active-site Proton acceptor is Cys66. Substrate is bound at residue 67–72 (GTGIGM). Residue His99 is the Proton donor of the active site. Arg133 is a substrate binding site.

It belongs to the LacAB/RpiB family.

The polypeptide is Putative sugar phosphate isomerase YwlF (ywlF) (Bacillus subtilis (strain 168)).